The primary structure comprises 154 residues: Large ribosomal subunit protein uL13 (154 aa).

The protein belongs to the universal ribosomal protein uL13 family. In terms of assembly, part of the 50S ribosomal subunit.

Functionally, this protein is one of the early assembly proteins of the 50S ribosomal subunit, although it is not seen to bind rRNA by itself. It is important during the early stages of 50S assembly. This chain is Large ribosomal subunit protein uL13, found in Rhizobium meliloti (strain 1021) (Ensifer meliloti).